We begin with the raw amino-acid sequence, 66 residues long: Sodium channel alpha-toxin Acra8 (66 aa).

The LCN-type CS-alpha/beta domain maps to 2-64; that stretch reads RDGYIVDDKN…VPIKEKGRCN (63 aa). 4 disulfides stabilise this stretch: cysteine 12/cysteine 63, cysteine 16/cysteine 36, cysteine 22/cysteine 46, and cysteine 26/cysteine 48. Asparagine 64 is subject to Asparagine amide. The propeptide occupies 65 to 66; the sequence is GR.

It belongs to the long (4 C-C) scorpion toxin superfamily. Sodium channel inhibitor family. Alpha subfamily. As to expression, expressed by the venom gland.

Its subcellular location is the secreted. Functionally, alpha toxins bind voltage-independently at site-3 of sodium channels (Nav) and inhibit the inactivation of the activated channels, thereby blocking neuronal transmission. The chain is Sodium channel alpha-toxin Acra8 from Androctonus crassicauda (Arabian fat-tailed scorpion).